Consider the following 123-residue polypeptide: Small ribosomal subunit protein eS25 (123 aa).

The span at 1–13 (MPPKKDTKGDSKK) shows a compositional bias: basic and acidic residues. The tract at residues 1–34 (MPPKKDTKGDSKKGQKAKAGSGGGKAKKKKWSKG) is disordered. Over residues 25–34 (KAKKKKWSKG) the composition is skewed to basic residues.

This sequence belongs to the eukaryotic ribosomal protein eS25 family.

The sequence is that of Small ribosomal subunit protein eS25 (RPS25) from Branchiostoma belcheri (Amphioxus).